Consider the following 192-residue polypeptide: MGASASTGLSRSQAALRIAPCQRWQIHPALRRPIFRACGRICRPRRKTQIAQTIATLMRRMQAIPGTPGRGLGRADQLEQKKVLAAFGGHAAKNKSNAYMLKGSEAETDAKARGDWEAAMEAFGQSQDEFHETSPRAKNASFTWTAVDGEFAAPSERITNEMLAEITERNADFLGHAQSGLEMLRRFEKRAG.

This is an uncharacterized protein from Sinorhizobium fredii (strain NBRC 101917 / NGR234).